A 341-amino-acid chain; its full sequence is Heat-inducible transcription repressor HrcA (341 aa).

Belongs to the HrcA family.

Its function is as follows. Negative regulator of class I heat shock genes (grpE-dnaK-dnaJ and groELS operons). Prevents heat-shock induction of these operons. This Corynebacterium glutamicum (strain ATCC 13032 / DSM 20300 / JCM 1318 / BCRC 11384 / CCUG 27702 / LMG 3730 / NBRC 12168 / NCIMB 10025 / NRRL B-2784 / 534) protein is Heat-inducible transcription repressor HrcA.